A 90-amino-acid polypeptide reads, in one-letter code: Small ribosomal subunit protein uS15c (90 aa).

The protein belongs to the universal ribosomal protein uS15 family. As to quaternary structure, part of the 30S ribosomal subunit.

The protein resides in the plastid. Its subcellular location is the chloroplast. The chain is Small ribosomal subunit protein uS15c (rps15) from Manihot esculenta (Cassava).